A 308-amino-acid chain; its full sequence is Protoheme IX farnesyltransferase (308 aa).

Transmembrane regions (helical) follow at residues Val20 to Ile40, Pro53 to Phe73, Asn102 to Thr122, Leu124 to Leu144, Thr149 to Ser169, Ala170 to Thr190, Leu227 to Met249, Val254 to Val276, and Tyr288 to Phe308.

The protein belongs to the UbiA prenyltransferase family. Protoheme IX farnesyltransferase subfamily.

Its subcellular location is the cell membrane. The enzyme catalyses heme b + (2E,6E)-farnesyl diphosphate + H2O = Fe(II)-heme o + diphosphate. Its pathway is porphyrin-containing compound metabolism; heme O biosynthesis; heme O from protoheme: step 1/1. Converts heme B (protoheme IX) to heme O by substitution of the vinyl group on carbon 2 of heme B porphyrin ring with a hydroxyethyl farnesyl side group. This is Protoheme IX farnesyltransferase from Mycobacterium leprae (strain TN).